We begin with the raw amino-acid sequence, 297 residues long: Cell division protein FtsX (297 aa).

Residues 1 to 24 (MKAKTLSRHLREGVKNLSRNGWMT) are Cytoplasmic-facing. The chain crosses the membrane as a helical span at residues 25–45 (FASVSAVTVTLLLVGVFLTAI). Residues 46–171 (MNMNHFATKV…LFDTVKTGRN (126 aa)) lie on the Extracellular side of the membrane. The helical transmembrane segment at 172–192 (IGIVLIAGLLFTAMFLISNTI) threads the bilayer. Residues 193–219 (KITIYARSTEIEIMKLVGATNWFIRWP) are Cytoplasmic-facing. The chain crosses the membrane as a helical span at residues 220-240 (FLLEGLFLGVLGSIIPIGLIL). Topologically, residues 241 to 270 (VTYNSLQGMFNEKLGGTIFELLPYSPFVFQ) are extracellular. A helical transmembrane segment spans residues 271–291 (LAGLLVLIGALIGMWGSVMSI). Residues 292 to 297 (RRFLKV) are Cytoplasmic-facing.

The protein belongs to the ABC-4 integral membrane protein family. FtsX subfamily. Interacts with FtsE.

It localises to the cell membrane. Functionally, part of the ABC transporter FtsEX involved in asymmetric cellular division facilitating the initiation of sporulation. The sequence is that of Cell division protein FtsX from Bacillus anthracis.